Reading from the N-terminus, the 533-residue chain is Probable lipid II flippase MurJ (533 aa).

Transmembrane regions (helical) follow at residues 25–45, 90–110, 131–151, 158–178, 192–212, 233–253, 274–294, 316–336, 350–370, 389–409, 412–432, 449–469, and 484–504; these read ETLM…YAAF, VLFS…PLLV, LAAV…MSGM, FFAA…ALFY, YLSW…YIGV, LLLL…NLVI, IYQL…LPEL, FVLF…DDII, TTLV…FVLI, YTAI…PVLA, GIAL…FVTL, AMLL…SHRW, and GVLG…AFLI.

It belongs to the MurJ/MviN family.

The protein resides in the cell inner membrane. It functions in the pathway cell wall biogenesis; peptidoglycan biosynthesis. Involved in peptidoglycan biosynthesis. Transports lipid-linked peptidoglycan precursors from the inner to the outer leaflet of the cytoplasmic membrane. The sequence is that of Probable lipid II flippase MurJ from Rhizobium tropici.